The primary structure comprises 697 residues: DNA ligase (697 aa).

NAD(+) is bound by residues 41-45, 90-91, and Glu-129; these read DPVYD and SL. Residue Lys-131 is the N6-AMP-lysine intermediate of the active site. NAD(+) is bound by residues Arg-152, Glu-189, Lys-308, and Lys-332. Residues Cys-426, Cys-429, Cys-444, and Cys-449 each contribute to the Zn(2+) site. The BRCT domain maps to 617 to 697; that stretch reads AANHHLTGST…ALQNMLRGST (81 aa).

It belongs to the NAD-dependent DNA ligase family. LigA subfamily. Mg(2+) is required as a cofactor. Mn(2+) serves as cofactor.

The catalysed reaction is NAD(+) + (deoxyribonucleotide)n-3'-hydroxyl + 5'-phospho-(deoxyribonucleotide)m = (deoxyribonucleotide)n+m + AMP + beta-nicotinamide D-nucleotide.. DNA ligase that catalyzes the formation of phosphodiester linkages between 5'-phosphoryl and 3'-hydroxyl groups in double-stranded DNA using NAD as a coenzyme and as the energy source for the reaction. It is essential for DNA replication and repair of damaged DNA. This Synechococcus sp. (strain CC9311) protein is DNA ligase.